Reading from the N-terminus, the 811-residue chain is Abnormal pharyngeal pumping eat-20 (811 aa).

The first 20 residues, 1-20 (MTTFCRVLLIFGIYVAVSCA), serve as a signal peptide directing secretion. The Extracellular portion of the chain corresponds to 21–749 (QSVEDDVFHF…GKQSSAVASW (729 aa)). Residues Asn90, Asn171, and Asn232 are each glycosylated (N-linked (GlcNAc...) asparagine). EGF-like domains lie at 220 to 257 (PPSPCANHECHNNGTCLVSQEGAAMCLCRNGFTGDRCE), 258 to 293 (LDVCSAVPCQNGGVCRSNNGIAYCECPPAFSGLLCE), and 301 to 335 (AAPICNPECSNGQCVLKDGQPQCECRQGFTGANCN). 9 disulfides stabilise this stretch: Cys224–Cys235, Cys229–Cys245, Cys247–Cys256, Cys261–Cys272, Cys266–Cys281, Cys283–Cys292, Cys305–Cys314, Cys309–Cys323, and Cys325–Cys334. A glycan (N-linked (GlcNAc...) asparagine) is linked at Asn371. Disordered regions lie at residues 544–579 (FVSPNMPDENEEEEEDETTDETEETFPTPSTMQVAT), 592–659 (FPTT…AIST), and 690–739 (PHPQ…HTSS). Residues 551–567 (DENEEEEEDETTDETEE) show a composition bias toward acidic residues. A compositionally biased stretch (polar residues) spans 570–579 (PTPSTMQVAT). The span at 597–612 (DMEETDEEEDMTEEVT) shows a compositional bias: acidic residues. The segment covering 626 to 639 (PSSTTFTTEAPTTT) has biased composition (low complexity). 2 stretches are compositionally biased toward acidic residues: residues 640-655 (MEEEETTEQEEIESEE) and 705-717 (IESEEERTTESNE). A helical transmembrane segment spans residues 750–770 (IIATIALIVLGSLLLATSLFV). At 771–811 (LRYIRQSRKLHGKYNPAREEHNLSAAYAMPMSHIAKEERLI) the chain is on the cytoplasmic side.

The protein resides in the membrane. In terms of biological role, regulates pharyngeal pumping during feeding. This is Abnormal pharyngeal pumping eat-20 (eat-20) from Caenorhabditis briggsae.